Reading from the N-terminus, the 170-residue chain is Adenine phosphoribosyltransferase (170 aa).

It belongs to the purine/pyrimidine phosphoribosyltransferase family. As to quaternary structure, homodimer.

It is found in the cytoplasm. The enzyme catalyses AMP + diphosphate = 5-phospho-alpha-D-ribose 1-diphosphate + adenine. It participates in purine metabolism; AMP biosynthesis via salvage pathway; AMP from adenine: step 1/1. Functionally, catalyzes a salvage reaction resulting in the formation of AMP, that is energically less costly than de novo synthesis. In Thermotoga petrophila (strain ATCC BAA-488 / DSM 13995 / JCM 10881 / RKU-1), this protein is Adenine phosphoribosyltransferase.